The chain runs to 346 residues: Porin Omp2a (346 aa).

A signal peptide spans 1–22; the sequence is MNIKSLLLGSAAALVAASGAQA.

It belongs to the alphaproteobacteria porin family. As to quaternary structure, monomer.

It localises to the cell outer membrane. Its function is as follows. Forms passive diffusion pores that allow small molecular weight hydrophilic materials across the outer membrane. This chain is Porin Omp2a (omp2a), found in Brucella ovis.